Here is a 212-residue protein sequence, read N- to C-terminus: Large ribosomal subunit protein uL3 (212 aa).

Residue Gln-153 is modified to N5-methylglutamine.

It belongs to the universal ribosomal protein uL3 family. Part of the 50S ribosomal subunit. Forms a cluster with proteins L14 and L19. Post-translationally, methylated by PrmB.

Its function is as follows. One of the primary rRNA binding proteins, it binds directly near the 3'-end of the 23S rRNA, where it nucleates assembly of the 50S subunit. This chain is Large ribosomal subunit protein uL3, found in Shewanella pealeana (strain ATCC 700345 / ANG-SQ1).